Consider the following 546-residue polypeptide: Oncoprotein-induced transcript 3 protein (546 aa).

The first 16 residues, 1 to 16 (MPLSLLLACLFTTVTL), serve as a signal peptide directing secretion. 2 N-linked (GlcNAc...) asparagine glycosylation sites follow: Asn-89 and Asn-116. Positions 182–222 (DENECEHNNGGCSEICVNLKNSHRCACGVGRVLRSDGKTCE) constitute an EGF-like; calcium-binding domain. 3 cysteine pairs are disulfide-bonded: Cys-186–Cys-197, Cys-193–Cys-206, and Cys-208–Cys-221. Residues 261-516 (TCQVPVLCKS…SRCAQGCHRR (256 aa)) enclose the ZP domain. An N-linked (GlcNAc...) asparagine glycan is attached at Asn-299. The tract at residues 524–546 (DEDSAGLQSQTLTGGPISIDWEE) is disordered.

The protein localises to the nucleus envelope. In terms of biological role, may be involved in hepatocellular function and development. The polypeptide is Oncoprotein-induced transcript 3 protein (Oit3) (Rattus norvegicus (Rat)).